The chain runs to 835 residues: Protein translocase subunit SecA (835 aa).

Residues Gln85, 103-107 (GEGKT), and Asp492 contribute to the ATP site. The disordered stretch occupies residues 788-807 (VQGEAVHPSSDGEEAKKKPV). Positions 819, 821, 830, and 831 each coordinate Zn(2+).

The protein belongs to the SecA family. Monomer and homodimer. Part of the essential Sec protein translocation apparatus which comprises SecA, SecYEG and auxiliary proteins SecDF. Other proteins may also be involved. It depends on Zn(2+) as a cofactor.

Its subcellular location is the cell membrane. It is found in the cytoplasm. The enzyme catalyses ATP + H2O + cellular proteinSide 1 = ADP + phosphate + cellular proteinSide 2.. In terms of biological role, part of the Sec protein translocase complex. Interacts with the SecYEG preprotein conducting channel. Has a central role in coupling the hydrolysis of ATP to the transfer of proteins into and across the cell membrane, serving as an ATP-driven molecular motor driving the stepwise translocation of polypeptide chains across the membrane. The polypeptide is Protein translocase subunit SecA (Bacillus cereus (strain G9842)).